The sequence spans 535 residues: cAMP-regulated D2 protein (535 aa).

Positions 1–20 (MNKLLVFILLLLLLINISFA) are cleaved as a signal peptide. Cysteine 89 and cysteine 109 are disulfide-bonded. The active-site Acyl-ester intermediate is the serine 213. A disulfide bond links cysteine 265 and cysteine 272. Residues glutamate 338 and histidine 440 each act as charge relay system in the active site. Residue asparagine 500 is glycosylated (N-linked (GlcNAc...) asparagine).

The protein belongs to the type-B carboxylesterase/lipase family.

The protein resides in the cytoplasmic vesicle. It is found in the esterosome membrane. This chain is cAMP-regulated D2 protein (D2), found in Dictyostelium discoideum (Social amoeba).